A 356-amino-acid polypeptide reads, in one-letter code: Tyrosine recombinase XerS (356 aa).

Residues 16–121 (IMPWYVLDYY…ALSSLYKYLT (106 aa)) form the Core-binding (CB) domain. Residues 169 to 354 (AFLDYVDKEY…VNDEQKNALD (186 aa)) enclose the Tyr recombinase domain. Residues Arg-210, Lys-234, His-306, Arg-309, and His-332 contribute to the active site. Tyr-341 serves as the catalytic O-(3'-phospho-DNA)-tyrosine intermediate.

The protein belongs to the 'phage' integrase family. XerS subfamily.

The protein resides in the cytoplasm. Its activity is regulated as follows. FtsK is required for recombination. Its function is as follows. Site-specific tyrosine recombinase, which acts by catalyzing the cutting and rejoining of the recombining DNA molecules. Essential to convert dimers of the bacterial chromosome into monomers to permit their segregation at cell division. The protein is Tyrosine recombinase XerS of Streptococcus pyogenes serotype M1.